A 169-amino-acid chain; its full sequence is Cell division inhibitor SulA (169 aa).

The segment at 106-112 (ALRTGNY) is ftsZ binding. Positions 162–169 (KIHSNLYH) are lon protease binding.

Belongs to the SulA family. As to quaternary structure, interacts with FtsZ. Post-translationally, is rapidly cleaved and degraded by the Lon protease once DNA damage is repaired.

Its function is as follows. Component of the SOS system and an inhibitor of cell division. Accumulation of SulA causes rapid cessation of cell division and the appearance of long, non-septate filaments. In the presence of GTP, binds a polymerization-competent form of FtsZ in a 1:1 ratio, thus inhibiting FtsZ polymerization and therefore preventing it from participating in the assembly of the Z ring. This mechanism prevents the premature segregation of damaged DNA to daughter cells during cell division. The chain is Cell division inhibitor SulA from Escherichia fergusonii (strain ATCC 35469 / DSM 13698 / CCUG 18766 / IAM 14443 / JCM 21226 / LMG 7866 / NBRC 102419 / NCTC 12128 / CDC 0568-73).